Here is a 92-residue protein sequence, read N- to C-terminus: Small ribosomal subunit protein uS19 (92 aa).

The protein belongs to the universal ribosomal protein uS19 family.

Functionally, protein S19 forms a complex with S13 that binds strongly to the 16S ribosomal RNA. The sequence is that of Small ribosomal subunit protein uS19 from Oceanobacillus iheyensis (strain DSM 14371 / CIP 107618 / JCM 11309 / KCTC 3954 / HTE831).